Consider the following 234-residue polypeptide: Protein UL20 homolog (234 aa).

The next 4 helical transmembrane spans lie at 82–102 (VVLFGLSTFVLRPSCCLIFLF), 112–132 (FLILGTTITAFFYGTLMLEMY), 153–173 (IGALSMLGPIIFVAISYNMIF), and 191–211 (TSGFVIYLVMIASLAYSITSI).

This sequence belongs to the alphaherpesvirinae UL20 family. In terms of assembly, interacts with gK (via N-terminus); this interaction plays a role in the coordinate transport of UL20 and gK to the trans-Golgi network (TGN), and is required for their cell surface expression. Interacts with gB.

It localises to the virion. Its subcellular location is the host cell membrane. The protein resides in the host endosome membrane. The protein localises to the host Golgi apparatus membrane. It is found in the host nucleus membrane. Its function is as follows. Plays an essential role in egress of virus particles from the nucleus, cytoplasmic envelopment and virus-induced cell fusion. Forms a functional protein complex with gK and this interaction is absolutely essential for their coordinate intracellular transport, gK glycosylation, expression on host cell surface, and function. Together, they modulate gB-mediated virus-induced cell fusion and virion egress and therefore actively participate in these processes. The protein is Protein UL20 homolog (MDV032) of Gallid herpesvirus 2 (strain Chicken/Md5/ATCC VR-987) (GaHV-2).